Here is a 143-residue protein sequence, read N- to C-terminus: ATP synthase subunit b' (143 aa).

Residues 6–26 (ATLPFMALQFLLLAAVLNAIF) form a helical membrane-spanning segment.

It belongs to the ATPase B chain family. As to quaternary structure, F-type ATPases have 2 components, F(1) - the catalytic core - and F(0) - the membrane proton channel. F(1) has five subunits: alpha(3), beta(3), gamma(1), delta(1), epsilon(1). F(0) has four main subunits: a(1), b(1), b'(1) and c(10-14). The alpha and beta chains form an alternating ring which encloses part of the gamma chain. F(1) is attached to F(0) by a central stalk formed by the gamma and epsilon chains, while a peripheral stalk is formed by the delta, b and b' chains.

It localises to the cellular thylakoid membrane. Functionally, f(1)F(0) ATP synthase produces ATP from ADP in the presence of a proton or sodium gradient. F-type ATPases consist of two structural domains, F(1) containing the extramembraneous catalytic core and F(0) containing the membrane proton channel, linked together by a central stalk and a peripheral stalk. During catalysis, ATP synthesis in the catalytic domain of F(1) is coupled via a rotary mechanism of the central stalk subunits to proton translocation. Its function is as follows. Component of the F(0) channel, it forms part of the peripheral stalk, linking F(1) to F(0). The b'-subunit is a diverged and duplicated form of b found in plants and photosynthetic bacteria. This chain is ATP synthase subunit b', found in Nostoc punctiforme (strain ATCC 29133 / PCC 73102).